The primary structure comprises 354 residues: Putative [LysW]-L-2-aminoadipate/[LysW]-L-glutamate phosphate reductase (354 aa).

NADP(+) is bound by residues 10-13 and 34-36; these read SGVI and SRR. Cysteine 153 is a catalytic residue. Asparagine 321 is a binding site for NADP(+).

This sequence belongs to the NAGSA dehydrogenase family. Type 1 subfamily. LysY sub-subfamily.

It is found in the cytoplasm. The catalysed reaction is [amino-group carrier protein]-C-terminal-N-(1-carboxy-5-oxopentan-1-yl)-L-glutamine + phosphate + NADP(+) = [amino-group carrier protein]-C-terminal-N-(1-carboxy-5-phosphooxy-5-oxopentan-1-yl)-L-glutamine + NADPH + H(+). It carries out the reaction [amino-group carrier protein]-C-terminal-gamma-(L-glutamyl-5-semialdehyde)-L-glutamate + phosphate + NADP(+) = [amino-group carrier protein]-C-terminal-gamma-(5-phospho-L-glutamyl)-L-glutamate + NADPH + H(+). It participates in amino-acid biosynthesis; L-lysine biosynthesis via AAA pathway; L-lysine from L-alpha-aminoadipate (Thermus route): step 3/5. Its pathway is amino-acid biosynthesis; L-arginine biosynthesis. Its function is as follows. Involved in both the arginine and lysine biosynthetic pathways. The chain is Putative [LysW]-L-2-aminoadipate/[LysW]-L-glutamate phosphate reductase from Caldivirga maquilingensis (strain ATCC 700844 / DSM 13496 / JCM 10307 / IC-167).